A 485-amino-acid polypeptide reads, in one-letter code: Glutamate--tRNA ligase 1 (485 aa).

Positions 10 to 20 (PSPTGAIHIGN) match the 'HIGH' region motif. A 'KMSKS' region motif is present at residues 252–256 (KLSKR). ATP is bound at residue Lys255.

Belongs to the class-I aminoacyl-tRNA synthetase family. Glutamate--tRNA ligase type 1 subfamily. Monomer.

Its subcellular location is the cytoplasm. It catalyses the reaction tRNA(Glu) + L-glutamate + ATP = L-glutamyl-tRNA(Glu) + AMP + diphosphate. Functionally, catalyzes the attachment of glutamate to tRNA(Glu) in a two-step reaction: glutamate is first activated by ATP to form Glu-AMP and then transferred to the acceptor end of tRNA(Glu). The sequence is that of Glutamate--tRNA ligase 1 from Thermoanaerobacter pseudethanolicus (strain ATCC 33223 / 39E) (Clostridium thermohydrosulfuricum).